The following is a 988-amino-acid chain: Echinoderm microtubule-associated protein-like 4 (988 aa).

M1 carries the N-acetylmethionine modification. Positions M1–D260 are microtubule-binding. Phosphoserine occurs at positions 7, 13, 16, 61, and 79. A coiled-coil region spans residues A14–K63. T96 carries the phosphothreonine modification. Positions T106–K194 are disordered. A compositionally biased stretch (basic and acidic residues) spans G114–S134. S134 bears the Phosphoserine; by NEK7 mark. Positions Q137–Q155 are enriched in low complexity. S144 carries the phosphoserine; by NEK6 modification. S146 carries the post-translational modification Phosphoserine; by NEK7. A compositionally biased stretch (polar residues) spans I156–P168. The residue at position 171 (S171) is a Phosphoserine. Over residues P176–N193 the composition is skewed to basic and acidic residues. S200 carries the phosphoserine modification. Residue T201 is modified to Phosphothreonine. Position 237 is a phosphotyrosine (Y237). At T248 the chain carries Phosphothreonine. 13 WD repeats span residues L270–Y308, T312–S359, V367–W407, A414–W449, R456–K495, Q511–H549, E554–T590, D593–S632, R636–A673, V679–V715, Y722–I761, R771–Y829, and A836–L875. T620 carries the phosphothreonine; by NEK6 and NEK7 modification. Residues I887 to C988 form a disordered region. Polar residues predominate over residues A890 to R904. Phosphoserine is present on residues S906, S908, and S914. Residues M927 to E939 are compositionally biased toward polar residues. Residues P944 to S953 are compositionally biased toward acidic residues.

It belongs to the WD repeat EMAP family. Homotrimer; self-association is mediated by the N-terminal coiled coil. Interacts (via WD repeats) with NUDC. Interacts with alpha- and beta-tubulin during mitosis. Phosphorylated during mitosis. Phosphorylation at Ser-144 and Ser-146 promotes its dissociation from microtubules during mitosis which is required for efficient chromosome congression.

It is found in the cytoplasm. It localises to the cytoskeleton. Its subcellular location is the spindle. The protein localises to the microtubule organizing center. The protein resides in the midbody. Functionally, essential for the stability of microtubules (MTs). Essential for the formation of MTs. Required for the organization of the mitotic spindle and for the proper attachment of kinetochores to MTs. Promotes the recruitment of NUDC to the mitotic spindle for mitotic progression. This is Echinoderm microtubule-associated protein-like 4 (Eml4) from Mus musculus (Mouse).